Here is a 467-residue protein sequence, read N- to C-terminus: UDP-N-acetylmuramate--L-alanine ligase (467 aa).

Residue 123–129 (GTHGKST) participates in ATP binding.

The protein belongs to the MurCDEF family.

The protein localises to the cytoplasm. It catalyses the reaction UDP-N-acetyl-alpha-D-muramate + L-alanine + ATP = UDP-N-acetyl-alpha-D-muramoyl-L-alanine + ADP + phosphate + H(+). It participates in cell wall biogenesis; peptidoglycan biosynthesis. Cell wall formation. In Arthrobacter sp. (strain FB24), this protein is UDP-N-acetylmuramate--L-alanine ligase.